Here is a 651-residue protein sequence, read N- to C-terminus: MNLKKFFNTPTHEPFRDKKAERNLFARRTLVAFLGILLLTGVLFTNIYQLQIVNFDTYQTRSNGNRIKLLPLPPTRGLIYDRYGKLLAENLTFFGLYIVPEKTENLDRTLDELRYIVGLTDNDIENFKKERRRGTRYTPILLKPNLTEEQISRFAVNGYQYPSLEVRPYFKRHYLYGETMAHILGYVGKMNDKDVERLKREDKFANYAGTNDIGKLGIERYYEDILQGTTGFEEVEINNRGKVIRTLRSRPAVAGKSIHLTIDLALQRYITELLSGLKGAVVVLDPKDSSVLAMVSTPSYDNNLFVDGISSEDYKRLLNDLARPLYSRATQGAYPPASTVKPFIAVAAQTENVITPNTTIFDPGYWVLPNSTKRFRDWKKTGHGDTDLNKAITESSDTYFYQVAYNMGIDRLSNWMKDFGFGMPTGIEIQEETAANIPTREWKQKRYKRPWVQGDTISVGIGQGYWTATPLQVAKATTILVNNGKVNTPHLMKAIEGAVLEPYEDPLLYPDINTPKVAAWEAAKRGMYNVVNAANGTGRKAFADANYRVAGKSGTAQVFSLKENEKYNTAGLKKELHDHAWFTAYAPYDNPKLVVTVILENAGGGSSNAAPLARKVMDYYLNQRLPQVEKYNVPIQQKKDLSQESEQINGR.

Residues 30 to 50 traverse the membrane as a helical segment; the sequence is LVAFLGILLLTGVLFTNIYQL. Ser-338 (acyl-ester intermediate) is an active-site residue.

This sequence belongs to the transpeptidase family. MrdA subfamily.

It is found in the cell inner membrane. It catalyses the reaction Preferential cleavage: (Ac)2-L-Lys-D-Ala-|-D-Ala. Also transpeptidation of peptidyl-alanyl moieties that are N-acyl substituents of D-alanine.. It functions in the pathway cell wall biogenesis; peptidoglycan biosynthesis. In terms of biological role, catalyzes cross-linking of the peptidoglycan cell wall. This Haemophilus influenzae (strain ATCC 51907 / DSM 11121 / KW20 / Rd) protein is Peptidoglycan D,D-transpeptidase MrdA.